Consider the following 1147-residue polypeptide: Disease resistance protein RPP4 (1147 aa).

In terms of domain architecture, TIR spans 11 to 175 (RRYDVFPSFS…KIANDVSNKL (165 aa)). Glutamate 86 is an active-site residue. Residues 189–446 (EDHIKAIKSI…CFFNGFKVSN (258 aa)) enclose the NB-ARC domain. 18 LRR repeats span residues 548-573 (MRNL…LWSK), 584-606 (PLKL…TFKA), 608-629 (YLVN…TLPL), 630-653 (GSLK…SLAI), 655-676 (LEEL…IQNA), 698-721 (MCNL…IYLP), 722-743 (RKLK…NFKA), 744-766 (EYLV…TQPL), 767-790 (GSLK…SLAI), 792-813 (LERL…IQNA), 814-836 (TKLI…DLNL), 837-860 (ESLE…KMGC), 926-950 (LGSL…SKAT), 952-973 (LKRL…IGNL), 974-996 (HRLV…DVNL), 997-1017 (SSLI…PLIS), 1018-1042 (TRIE…DLTR), and 1044-1064 (SVLL…IFRL).

As to quaternary structure, interacts with RSH1.

It catalyses the reaction NAD(+) + H2O = ADP-D-ribose + nicotinamide + H(+). In terms of biological role, TIR-NB-LRR receptor-like protein that confers resistance to the pathogen Hyaloperonospora arabidopsis isolates Emoy2 and Emwa1 (downy mildew disease). Plays a role in the regulation of temperature response during plant growth and survival. This is Disease resistance protein RPP4 from Arabidopsis thaliana (Mouse-ear cress).